The primary structure comprises 237 residues: MSLFAAIGYMVREVFVFVSYVKNNAFPQPLSSDDERKYLELMEQGDAQARNLLIEHNLRLVAHIVKKFENTGEDAEDLISIGTIGLIKAIESYSAGKGTKLATYAARCIENEILMHLRVLKKTKKDVSLHDPIGQDKEGNEISLIDILKSESEDVIDMIQLSMELEKIKEYIDILDEREKEVIVKRFGLGLDKEKTQREIAKALGISRSYVSRIEKRALMKMFHEFVRAEKEKKAKE.

Residues 1 to 19 constitute a propeptide that is removed on maturation; it reads MSLFAAIGYMVREVFVFVS. Positions 77 to 90 match the Polymerase core binding motif; it reads DLISIGTIGLIKAI. The H-T-H motif DNA-binding region spans 197–206; that stretch reads QREIAKALGI.

It belongs to the sigma-70 factor family. Proteolytically cleaved in the N-terminus probably by a SpoIIGA homolog to yield the active peptide.

Sigma factors are initiation factors that promote the attachment of RNA polymerase to specific initiation sites and are then released. This sigma factor directs the transcription of crystal protein genes, a sporulation-regulated event. This is RNA polymerase sigma-28 factor (sigK) from Bacillus thuringiensis subsp. kurstaki.